The following is a 276-amino-acid chain: Triple specificity protein phosphatase PtpB (276 aa).

Cysteine 160 (phosphocysteine intermediate) is an active-site residue. Residues 232–250 (LGVRAEYLAAARQTIDETY) form a UIM-like region region.

This sequence belongs to the protein-tyrosine phosphatase family. In terms of assembly, interacts (via UIM-like region) with host ubiquitin; activating the phosphatidylinositol phosphate phosphatase activity.

The protein resides in the secreted. It is found in the host cytoplasm. Its subcellular location is the host cell membrane. The catalysed reaction is O-phospho-L-tyrosyl-[protein] + H2O = L-tyrosyl-[protein] + phosphate. The enzyme catalyses O-phospho-L-seryl-[protein] + H2O = L-seryl-[protein] + phosphate. It catalyses the reaction O-phospho-L-threonyl-[protein] + H2O = L-threonyl-[protein] + phosphate. It carries out the reaction 1,2-dioctanoyl-sn-glycero-3-phospho-(1-D-myo-inositol-3-phosphate) + H2O = 1,2-dioctanoyl-sn-glycero-3-phospho-(1D-myo-inositol) + phosphate. The catalysed reaction is 1,2-dioctanoyl-sn-glycero-3-phospho-(1-D-myo-inositol-4-phosphate) + H2O = 1,2-dioctanoyl-sn-glycero-3-phospho-(1D-myo-inositol) + phosphate. The enzyme catalyses 1,2-dioctanoyl-sn-glycero-3-phospho-(1D-myo-inositol-5-phosphate) + H2O = 1,2-dioctanoyl-sn-glycero-3-phospho-(1D-myo-inositol) + phosphate. Binding to host ubiquitin is required to activate the phosphatidylinositol phosphate phosphatase activity. Phosphatase activity is inhibited by sodium orthovanadate, a specific inhibitor of tyrosine phosphatases, but not by okadaic acid, an inhibitor of serine/threonine phosphatases. Inhibition of the enzyme reduces mycobacterial survival in infected macrophages. Inhibitors also enhance killing efficacy by first-line antibiotics. Essential virulence factor that promotes mycobacterial survival within host macrophages. Acts as a phosphatase that possesses triple substrate specificity toward phosphotyrosine, phosphoserine/threonine and phosphoinositides. Supports mycobacteria survival during infection by modulating the normal host signaling pathways, attenuating the bactericidal immune responses and promoting the host cell survival. Inhibits host pyroptosis by disrupting the membrane localization of host gasdermin-D (GSDMD): acts by catalyzing dephosphorylation of phosphatidylinositol (4,5)-bisphosphate and phosphatidylinositol 4-phosphate, thereby inhibiting the membrane targeting of GSDMD and subsequent cytokine release and pyroptosis. Inhibits host inflammatory responses and apoptosis through impeding the NF-kappa-B and MAPK signal pathways and TP53/p53 expression in the macrophage. Blocks the IL6/IL-6 production by down-regulating ERK1/2, p38 and p65 activity. Prevents macrophage cell death by activating the Akt pathway and blocking caspase 3 activity. Reduces the expression of iNOS in activated macrophages and inhibits the generation of destroying reactive nitrogen intermediate NO. The chain is Triple specificity protein phosphatase PtpB from Mycobacterium tuberculosis (strain ATCC 25618 / H37Rv).